The following is a 194-amino-acid chain: MASSTLSSLSSTPLQHSFAANLKTCSQFPNKSSGFMVFAQKKTKKTRKIILKEDIVNVGKKGELLDVRVGFFRNFLFPSGKAQLVTPGVLKEMKIEEERIEAEKRRVLEEAQQLALFFETFGAFKVKRKGGKGKQIFGSVTAQDLVDIIKAQLQREVDKRIVNLPEIRETGEYIAELKLHPDVTAKVRVNVIAN.

A chloroplast-targeting transit peptide spans 1 to 39 (MASSTLSSLSSTPLQHSFAANLKTCSQFPNKSSGFMVFA).

It belongs to the bacterial ribosomal protein bL9 family. As to quaternary structure, part of the 50S ribosomal subunit.

It is found in the plastid. The protein resides in the chloroplast. In terms of biological role, binds to the 23S rRNA. The chain is Large ribosomal subunit protein bL9c (RPL9) from Pisum sativum (Garden pea).